The chain runs to 50 residues: Mast cell degranulating peptide (50 aa).

Residues 1–27 (MISMLRCTFFFLSVILITSYFVTPTMS) form the signal peptide. Position 29 is an N6-formyllysine; partial (lysine 29). 2 cysteine pairs are disulfide-bonded: cysteine 30/cysteine 42 and cysteine 32/cysteine 46. Residues lysine 44 and lysine 48 each carry the N6-formyllysine; partial modification. Residue asparagine 49 is modified to Asparagine amide.

In terms of tissue distribution, expressed by the venom gland.

Its subcellular location is the secreted. Its function is as follows. Potent anti-inflammatory agent. At low concentrations, mediates the degranulation of mast cells thus evoking an inflammatory response. Also acts as a neurotoxin capable of blocking a class of voltage-gated potassium channels. The polypeptide is Mast cell degranulating peptide (Apis mellifera (Honeybee)).